Reading from the N-terminus, the 738-residue chain is Vesicle-fusing ATPase (738 aa).

ATP contacts are provided by residues 507–512 (NGIINY) and 547–554 (PGCGKSSL).

Belongs to the AAA ATPase family. In terms of assembly, interacts with syn7A, snpA and snpC. Requires Mg(2+) as cofactor.

It localises to the cytoplasmic vesicle membrane. The protein localises to the endosome membrane. It carries out the reaction ATP + H2O = ADP + phosphate + H(+). Functionally, required for vesicle-mediated transport. Involved in endocytosis and endosome-endosome fusion. May be required for transport from the endoplasmic reticulum to the Golgi stack, and for the fusion of transport vesicles within the Golgi cisternae. Required for cell polarity, locomotion and chemotaxis. This chain is Vesicle-fusing ATPase (nsfA), found in Dictyostelium discoideum (Social amoeba).